The sequence spans 634 residues: Probable potassium transport system protein Kup (634 aa).

A run of 12 helical transmembrane segments spans residues 19-39 (AIGLMVGAVGVCYGDIGTSPL), 62-82 (VLSLIFWSLVWVVSIKYVIFV), 113-133 (FVVVAGLIGAALFYGDSMITP), 150-170 (GLEHWTVPLALIVLIGLFLIQ), 177-197 (IGILFGPVMVLWFGALAALGV), 225-245 (IGVAILGATVLALTGAEALYA), 259-279 (WFLLVLPALVLNYFGQGATIL), 291-311 (LLAPGWALLPMVALSTLATVI), 349-369 (IYIGGVNWALMVGVVLLVLGF), 379-399 (YGVAVTGTMLITTLLMGVVIW), 406-426 (LWLGVPFFCVMLAVDSLFFAA), and 431-451 (VIQGGAFPVIAGIVIFILMST).

The protein belongs to the HAK/KUP transporter (TC 2.A.72) family.

Its subcellular location is the cell inner membrane. The catalysed reaction is K(+)(in) + H(+)(in) = K(+)(out) + H(+)(out). Transport of potassium into the cell. Likely operates as a K(+):H(+) symporter. This Pseudomonas aeruginosa (strain UCBPP-PA14) protein is Probable potassium transport system protein Kup.